Consider the following 453-residue polypeptide: F-box/FBD/LRR-repeat protein At4g00160 (453 aa).

The F-box domain occupies 15 to 68 (KDRISELPDALLIKILSFLPTKIVVATSVFSKQWRPLWKLVPNLEFDSEDYDDK). LRR repeat units follow at residues 89 to 111 (LESF…LWVG), 165 to 190 (MKSL…LLSG), 215 to 239 (VPSL…VINA), 247 to 270 (IEDL…IFDG), 282 to 307 (LTSV…IFYQ), and 331 to 358 (SPKL…KWNE). The 52-residue stretch at 355–406 (KWNEPKYVPECLLSHLETFVWRRFDWGREEEKEIATYILKNARRLNKATFST) folds into the FBD domain.

This chain is F-box/FBD/LRR-repeat protein At4g00160, found in Arabidopsis thaliana (Mouse-ear cress).